A 302-amino-acid polypeptide reads, in one-letter code: Glutaminase (302 aa).

The substrate site is built by Ser61, Asn111, Glu155, Asn162, Tyr186, Tyr238, and Val256.

Belongs to the glutaminase family. In terms of assembly, homotetramer.

It catalyses the reaction L-glutamine + H2O = L-glutamate + NH4(+). This Pseudomonas fluorescens (strain SBW25) protein is Glutaminase.